The chain runs to 778 residues: Semaphorin-3ab (778 aa).

The N-terminal stretch at 1 to 17 (MDYLWWIVLLIWTLIAP) is a signal peptide. Residues 32-515 (RLKPSYKEML…SAIGVSQMPL (484 aa)) form the Sema domain. Residue Asn54 is glycosylated (N-linked (GlcNAc...) asparagine). The cysteines at positions 105 and 116 are disulfide-linked. Asn127 carries N-linked (GlcNAc...) asparagine glycosylation. 4 disulfide bridges follow: Cys134–Cys143, Cys270–Cys382, Cys294–Cys342, and Cys518–Cys536. Residues 579 to 668 (GEAGLLDKTV…FIQTLLRLTL (90 aa)) enclose the Ig-like C2-type domain. Residue Asn593 is glycosylated (N-linked (GlcNAc...) asparagine). A disulfide bridge connects residues Cys652 and Cys716. A disordered region spans residues 727–778 (RRQKANLLHASQSHTSQILHSSQSHAKWKLLQENKKGRNRRTHEMQRAPRSV). Residues 735-751 (HASQSHTSQILHSSQSH) are compositionally biased toward polar residues. Positions 756-778 (LLQENKKGRNRRTHEMQRAPRSV) are enriched in basic and acidic residues.

The protein belongs to the semaphorin family. As to expression, expressed in rhombomeres three and five, and in the posterior half of newly formed somites which is avoided by ventrally extending motor axons.

Its subcellular location is the secreted. In terms of biological role, might normally influence the midsegmental pathway choice of the ventrally extending motor axons by contributing to a repulsive domain in the posterior somite. The polypeptide is Semaphorin-3ab (sema3ab) (Danio rerio (Zebrafish)).